We begin with the raw amino-acid sequence, 524 residues long: Cytochrome P450 monooxygenase lnaC (524 aa).

The helical transmembrane segment at 16-36 (ALAVSCIAVSLFLLSPWIAYA) threads the bilayer. Residue Asn150 is glycosylated (N-linked (GlcNAc...) asparagine). Residue Cys471 participates in heme binding.

It belongs to the cytochrome P450 family. It depends on heme as a cofactor.

Its subcellular location is the membrane. It participates in secondary metabolite biosynthesis. Functionally, cytochrome P450 monooxygenase; part of the lna gene cluster that mediates the biosynthesis of diastereomeric piperazines. Lna and lnb clusters encode sets of enzymes that produce overlapping sets of previously undescribed metabolites such as piperazinomycin-like metabolites or morpholine. The lna and lnb biosynthetic pathways appear to be part of a signaling network that controls the formation of sclerotia, a resilient overwintering structure. One primary function of the non-canonical nonribosomal peptide synthetases lnaA and lnbA consists in the reduction of L-tyrosine. The presence in the clusters of tailoring enzymes such as the oxidoreductases lnaB, lnbB, lnaE or lnbE, as well as of the cytochrome P450 monooxygenases lnaC, lnaD, or lnbC, might explain formation of various diastereomeric piperazines. The protein is Cytochrome P450 monooxygenase lnaC of Aspergillus flavus (strain ATCC 200026 / FGSC A1120 / IAM 13836 / NRRL 3357 / JCM 12722 / SRRC 167).